The chain runs to 61 residues: Sec-independent protein translocase protein TatA (61 aa).

Residues 1 to 21 (MFGLGITEILLILGIIILIFG) traverse the membrane as a helical segment.

The protein belongs to the TatA/E family. As to quaternary structure, the Tat system comprises two distinct complexes: a TatABC complex, containing multiple copies of TatA, TatB and TatC subunits, and a separate TatA complex, containing only TatA subunits. Substrates initially bind to the TatABC complex, which probably triggers association of the separate TatA complex to form the active translocon.

The protein resides in the cell inner membrane. Part of the twin-arginine translocation (Tat) system that transports large folded proteins containing a characteristic twin-arginine motif in their signal peptide across membranes. TatA could form the protein-conducting channel of the Tat system. This is Sec-independent protein translocase protein TatA from Maridesulfovibrio salexigens (strain ATCC 14822 / DSM 2638 / NCIMB 8403 / VKM B-1763) (Desulfovibrio salexigens).